Reading from the N-terminus, the 350-residue chain is Protein RecA (350 aa).

An ATP-binding site is contributed by 67 to 74 (GPESSGKT).

This sequence belongs to the RecA family.

The protein resides in the cytoplasm. Can catalyze the hydrolysis of ATP in the presence of single-stranded DNA, the ATP-dependent uptake of single-stranded DNA by duplex DNA, and the ATP-dependent hybridization of homologous single-stranded DNAs. It interacts with LexA causing its activation and leading to its autocatalytic cleavage. The polypeptide is Protein RecA (Mycobacterium avium (strain 104)).